The chain runs to 256 residues: Protein US2 homolog (256 aa).

Disordered stretches follow at residues 100-120 (TRRP…SPPP), 167-186 (STAA…RRRP), and 236-256 (VRRR…CTIS). Over residues 167-180 (STAAGAPGAPTGAR) the composition is skewed to low complexity. Over residues 245 to 256 (NGRERAPRCTIS) the composition is skewed to basic and acidic residues.

It belongs to the herpesviridae US2 family.

This chain is Protein US2 homolog (28K), found in Sus scrofa (Pig).